Consider the following 117-residue polypeptide: Large ribosomal subunit protein eL30B (117 aa).

Residues 1-14 (MSAAPTTAPVAAVS) show a composition bias toward low complexity. The segment at 1 to 22 (MSAAPTTAPVAAVSKKGKKSGD) is disordered.

Belongs to the eukaryotic ribosomal protein eL30 family. In terms of assembly, component of the large ribosomal subunit (LSU). Mature yeast ribosomes consist of a small (40S) and a large (60S) subunit. The 40S small subunit contains 1 molecule of ribosomal RNA (18S rRNA) and at least 33 different proteins. The large 60S subunit contains 3 rRNA molecules (25S, 5.8S and 5S rRNA) and at least 46 different proteins.

It localises to the cytoplasm. Its function is as follows. Component of the ribosome, a large ribonucleoprotein complex responsible for the synthesis of proteins in the cell. The small ribosomal subunit (SSU) binds messenger RNAs (mRNAs) and translates the encoded message by selecting cognate aminoacyl-transfer RNA (tRNA) molecules. The large subunit (LSU) contains the ribosomal catalytic site termed the peptidyl transferase center (PTC), which catalyzes the formation of peptide bonds, thereby polymerizing the amino acids delivered by tRNAs into a polypeptide chain. The nascent polypeptides leave the ribosome through a tunnel in the LSU and interact with protein factors that function in enzymatic processing, targeting, and the membrane insertion of nascent chains at the exit of the ribosomal tunnel. The protein is Large ribosomal subunit protein eL30B (rpl3002) of Schizosaccharomyces pombe (strain 972 / ATCC 24843) (Fission yeast).